A 189-amino-acid chain; its full sequence is MKKTTSLLIAALAVAPLAHAAEGGFVGGLMYAATDPVTFVAFLCMVTFLLIAARMGAFKTILGGLDTRASNIRKELEEAASLREQAAEALALAERRAQDADKEAEAIIDQAKRDAKAMLEEARRDLAEKISRREAQAAARITRAETEATSEVRRAAADAATAAARRILSEQTSVDQFEAAARDIERALS.

A helical membrane pass occupies residues 7–27 (LLIAALAVAPLAHAAEGGFVG).

Belongs to the ATPase B chain family. F-type ATPases have 2 components, F(1) - the catalytic core - and F(0) - the membrane proton channel. F(1) has five subunits: alpha(3), beta(3), gamma(1), delta(1), epsilon(1). F(0) has three main subunits: a(1), b(2) and c(10-14). The alpha and beta chains form an alternating ring which encloses part of the gamma chain. F(1) is attached to F(0) by a central stalk formed by the gamma and epsilon chains, while a peripheral stalk is formed by the delta and b chains.

It is found in the cell inner membrane. Its function is as follows. F(1)F(0) ATP synthase produces ATP from ADP in the presence of a proton or sodium gradient. F-type ATPases consist of two structural domains, F(1) containing the extramembraneous catalytic core and F(0) containing the membrane proton channel, linked together by a central stalk and a peripheral stalk. During catalysis, ATP synthesis in the catalytic domain of F(1) is coupled via a rotary mechanism of the central stalk subunits to proton translocation. Component of the F(0) channel, it forms part of the peripheral stalk, linking F(1) to F(0). The protein is ATP synthase subunit b of Hyphomonas neptunium (strain ATCC 15444).